Consider the following 412-residue polypeptide: Indian hedgehog B protein (412 aa).

Residues 1–23 (MRLSTAAALLTGFILAFSPAYDG) form the signal peptide. Residue Cys-24 is the site of N-palmitoyl cysteine attachment. 7 residues coordinate Ca(2+): Glu-89, Glu-90, Asp-95, Thr-125, Glu-126, Asp-129, and Asp-131. The Zn(2+) site is built by His-140, Asp-147, and His-182. Gly-197 is lipidated: Cholesterol glycine ester.

It belongs to the hedgehog family. Multimer. In terms of assembly, interacts with BOC and CDON. Interacts with PTCH1. Interacts with glypican GPC3. Cholesterylation is required for N-product targeting to lipid rafts and multimerization. In terms of processing, the C-terminal domain displays an autoproteolysis activity and a cholesterol transferase activity. Both activities result in the cleavage of the full-length protein and covalent attachment of a cholesterol moiety to the C-terminal of the newly generated N-product. The N-product is the active species in both local and long-range signaling, whereas the C-product is degraded in the endoplasmic reticulum. Post-translationally, N-palmitoylation by HHAT of N-product is required for indian hedgehog protein N-product multimerization and full activity. In terms of tissue distribution, expressed exclusively in the notochord.

It localises to the cell membrane. It is found in the endoplasmic reticulum membrane. The protein resides in the golgi apparatus membrane. Its subcellular location is the secreted. The catalysed reaction is glycyl-L-cysteinyl-[protein] + cholesterol + H(+) = [protein]-C-terminal glycyl cholesterol ester + N-terminal L-cysteinyl-[protein]. Functionally, signal involved in the early induction and patterning of anterodorsal ectoderm, nervous system and somites. It is involved in the regulation of endochondral skeleton formation, and the development of retinal pigment epithelium (RPE), photoreceptors and periocular tissues. In terms of biological role, the C-terminal part of the indian hedgehog protein precursor displays an autoproteolysis and a cholesterol transferase activity. Both activities result in the cleavage of the full-length protein into two parts followed by the covalent attachment of a cholesterol moiety to the C-terminal of the newly generated N-product. Both activities occur in the endoplasmic reticulum. Its function is as follows. The dually lipidated indian hedgehog protein N-product is a morphogen which is essential for a variety of patterning events during development. Binds to the patched (PTCH1) receptor, which functions in association with smoothened (SMO), to activate the transcription of target genes. In the notochord, induces somite patterning and muscle pioneer differentiation. The sequence is that of Indian hedgehog B protein (ihhb) from Danio rerio (Zebrafish).